Reading from the N-terminus, the 190-residue chain is UPF0316 protein Mboo_0605 (190 aa).

A run of 3 helical transmembrane segments spans residues 3–23 (IGTF…RIAE), 41–61 (LAAY…GLVL), and 67–87 (FWNL…GMEI).

This sequence belongs to the UPF0316 family.

It is found in the cell membrane. In Methanoregula boonei (strain DSM 21154 / JCM 14090 / 6A8), this protein is UPF0316 protein Mboo_0605.